The following is a 1257-amino-acid chain: Probable aldehyde oxidase gad-3 (1257 aa).

In terms of domain architecture, 2Fe-2S ferredoxin-type spans 4–91; the sequence is TGIFFNVNGK…KTFVITVEGV (88 aa). Positions 43, 48, 51, and 73 each coordinate [2Fe-2S] cluster. The 231-residue stretch at 229–459 folds into the FAD-binding PCMH-type domain; that stretch reads LKGDRIELLL…TSLEVHIDAL (231 aa). The Proton acceptor role is filled by Glu1208.

This sequence belongs to the xanthine dehydrogenase family. The cofactor is [2Fe-2S] cluster. FAD is required as a cofactor. It depends on Mo-molybdopterin as a cofactor.

It catalyses the reaction an aldehyde + O2 + H2O = a carboxylate + H2O2 + H(+). In terms of biological role, may be involved in the metabolism of 1-methylnicotinamide (MNA). Linked to regulation of longevity through generation of reactive oxygen species, where it probably functions in a pathway downstream of the sirtuin sir-2.1 and the nicotinamide N-methyltransferase anmt-1. The protein is Probable aldehyde oxidase gad-3 of Caenorhabditis elegans.